The following is a 469-amino-acid chain: 6-phospho-beta-galactosidase (469 aa).

Residues glutamine 19, histidine 116, asparagine 159, glutamate 160, and asparagine 297 each coordinate D-galactose 6-phosphate. The active-site Proton donor is glutamate 160. The active-site Nucleophile is glutamate 375. D-galactose 6-phosphate-binding residues include serine 428, tryptophan 429, lysine 435, and tyrosine 437.

Belongs to the glycosyl hydrolase 1 family.

It catalyses the reaction a 6-phospho-beta-D-galactoside + H2O = D-galactose 6-phosphate + an alcohol. It functions in the pathway carbohydrate metabolism; lactose degradation; D-galactose 6-phosphate and beta-D-glucose from lactose 6-phosphate: step 1/1. The protein is 6-phospho-beta-galactosidase of Streptococcus equi subsp. zooepidemicus (strain H70).